The following is an 868-amino-acid chain: Alanine--tRNA ligase (868 aa).

Residues His556, His560, Cys666, and His670 each contribute to the Zn(2+) site.

Belongs to the class-II aminoacyl-tRNA synthetase family. The cofactor is Zn(2+).

The protein resides in the cytoplasm. The catalysed reaction is tRNA(Ala) + L-alanine + ATP = L-alanyl-tRNA(Ala) + AMP + diphosphate. Its function is as follows. Catalyzes the attachment of alanine to tRNA(Ala) in a two-step reaction: alanine is first activated by ATP to form Ala-AMP and then transferred to the acceptor end of tRNA(Ala). Also edits incorrectly charged Ser-tRNA(Ala) and Gly-tRNA(Ala) via its editing domain. This is Alanine--tRNA ligase from Elusimicrobium minutum (strain Pei191).